Reading from the N-terminus, the 427-residue chain is Gamma-glutamyl phosphate reductase (427 aa).

This sequence belongs to the gamma-glutamyl phosphate reductase family.

It is found in the cytoplasm. The enzyme catalyses L-glutamate 5-semialdehyde + phosphate + NADP(+) = L-glutamyl 5-phosphate + NADPH + H(+). Its pathway is amino-acid biosynthesis; L-proline biosynthesis; L-glutamate 5-semialdehyde from L-glutamate: step 2/2. Its function is as follows. Catalyzes the NADPH-dependent reduction of L-glutamate 5-phosphate into L-glutamate 5-semialdehyde and phosphate. The product spontaneously undergoes cyclization to form 1-pyrroline-5-carboxylate. This chain is Gamma-glutamyl phosphate reductase, found in Anaeromyxobacter dehalogenans (strain 2CP-1 / ATCC BAA-258).